Here is an 84-residue protein sequence, read N- to C-terminus: MIKGIAGVGGTALGVGGGVAAPPVSAAAVGSTLLAGKGVCLGLGLGLGAWGPVLLGVAGLACAASLCDYLKNRKAQAEASAEPA.

Topologically, residues 1 to 3 (MIK) are cytoplasmic. A helical membrane pass occupies residues 4 to 24 (GIAGVGGTALGVGGGVAAPPV). Over 25 to 40 (SAAAVGSTLLAGKGVC) the chain is Lumenal. The segment at 41 to 48 (LGLGLGLG) is LG repeat. The helical transmembrane segment at 41–61 (LGLGLGLGAWGPVLLGVAGLA) threads the bilayer. Residues 62-84 (CAASLCDYLKNRKAQAEASAEPA) are Cytoplasmic-facing.

Belongs to the magnetosome MamG (TC 9.B.95) protein family.

Its subcellular location is the magnetosome membrane. In terms of biological role, plays a role in regulating magnetite crystal size. The protein is Magnetosome protein MamG of Magnetospirillum gryphiswaldense (strain DSM 6361 / JCM 21280 / NBRC 15271 / MSR-1).